A 1580-amino-acid polypeptide reads, in one-letter code: Transcriptional activator GLI3 (1580 aa).

The residue at position 1 (methionine 1) is an N-acetylmethionine. Composition is skewed to polar residues over residues 1 to 10 and 58 to 78; these read MEAQSHSSTT and ITMQPQNVQGLSKVSEEPSTS. A disordered region spans residues 1–79; the sequence is MEAQSHSSTT…KVSEEPSTSS (79 aa). Residue arginine 175 is modified to Omega-N-methylarginine. The segment at 368 to 475 is disordered; it reads QSLGSAFGHS…DKDESKQEPE (108 aa). Polar residues predominate over residues 401-427; that stretch reads NPVQVSSGPSESSQNKPTSESAVSSTG. Glycyl lysine isopeptide (Lys-Gly) (interchain with G-Cter in SUMO2) cross-links involve residues lysine 438 and lysine 462. Over residues 461 to 474 the composition is skewed to basic and acidic residues; the sequence is VKEEGDKDESKQEP. 5 C2H2-type zinc fingers span residues 480 to 505, 513 to 540, 546 to 570, 576 to 601, and 607 to 632; these read TNCHWEGCAREFDTQEQLVHHINNDH, FVCRWLDCSREQKPFKAQYMLVVHMRRH, HKCTFEGCTKAYSRLENLKTHLRSH, YVCEHEGCNKAFSNASDRAKHQNRTH, and YVCKIPGCTKRYTDPSSLRKHVKTVH. A disordered region spans residues 620–728; that stretch reads DPSSLRKHVK…PISNYSNSGL (109 aa). A compositionally biased stretch (basic and acidic residues) spans 632 to 648; that stretch reads HGPEAHVTKKQRGDIHP. Residue serine 664 is modified to Phosphoserine. Positions 684 to 699 are enriched in basic and acidic residues; it reads SKREECLQVKTVKAEK. The span at 703 to 726 shows a compositional bias: low complexity; the sequence is SQPSPGGQSSCSSQQSPISNYSNS. Residues 745-845 are mediates interaction with DZIP1; the sequence is DETPIMDSTI…VDVTMLNMLN (101 aa). Lysine 773 participates in a covalent cross-link: Glycyl lysine isopeptide (Lys-Gly) (interchain with G-Cter in ubiquitin). Lysine 779 participates in a covalent cross-link: Glycyl lysine isopeptide (Lys-Gly) (interchain with G-Cter in SUMO2); alternate. Lysine 779 participates in a covalent cross-link: Glycyl lysine isopeptide (Lys-Gly) (interchain with G-Cter in ubiquitin); alternate. Residues lysine 784 and lysine 800 each participate in a glycyl lysine isopeptide (Lys-Gly) (interchain with G-Cter in ubiquitin) cross-link. Serine 849, serine 865, serine 877, and serine 907 each carry phosphoserine; by PKA. A compositionally biased stretch (low complexity) spans 863–882; that stretch reads RSSGISPCFSSRRSSEASQA. A disordered region spans residues 863–918; the sequence is RSSGISPCFSSRRSSEASQAEGRPQNVSVADSYDPISTDASRRSSEASQSDGLPSL. Residues 908–918 are compositionally biased toward polar residues; it reads EASQSDGLPSL. 2 positions are modified to phosphoserine; by PKA: serine 980 and serine 1006. Positions 981 to 1042 are disordered; it reads DGGAHGYGRR…PAMATSAEKR (62 aa).

The protein belongs to the GLI C2H2-type zinc-finger protein family. The full-length GLI3 form (GLI3FL) interacts with SUFU and this interaction regulates the formation of either repressor or activator forms of GLI3. Its association with SUFU is regulated by Hh signaling and dissociation of the SUFU-GLI3 interaction requires the presence of the ciliary motor KIF3A. Interacts with KIF7. The activator form of GLI3 (GLI3A) but not the repressor form (GLI3R) can interact with TRPS1. The phosphorylated form interacts with BTRC. Interacts with ZIC1. Interacts with ZIC3 (via C2H2-type domains 3, 4 and 5); the interaction enhances its transcriptional activity. Interacts with WRD11; the interaction associates EMX1 with GLI3. Interacts with DZIP1; retains GLI3 within the cytoplasm. Post-translationally, phosphorylated on multiple sites by protein kinase A (PKA) and phosphorylation by PKA primes further phosphorylation by CK1 and GSK3. Phosphorylated by DYRK2 (in vitro). Phosphorylation is essential for its proteolytic processing. Transcriptional repressor GLI3R, a C-terminally truncated form, is generated from the full-length GLI3 protein (GLI3FL/GLI3-190) through proteolytic processing. This process requires PKA-primed phosphorylation of GLI3, ubiquitination of GLI3 and the presence of BTRC. GLI3FL is complexed with SUFU in the cytoplasm and is maintained in a neutral state. Without the Hh signal, the SUFU-GLI3 complex is recruited to cilia, leading to the efficient processing of GLI3FL into GLI3R. GLI3R formation leads to its dissociation from SUFU, allowing it to translocate into the nucleus, and repress Hh target genes. When Hh signaling is initiated, SUFU dissociates from GLI3FL and this has two consequences. First, GLI3R production is halted. Second, free GLI3FL translocates to the nucleus, where it is phosphorylated, destabilized, and converted to a transcriptional activator (GLI3A). Phosphorylated in vitro by ULK3.

It localises to the nucleus. The protein resides in the cytoplasm. Its subcellular location is the cell projection. It is found in the cilium. Its function is as follows. Has a dual function as a transcriptional activator and a repressor of the sonic hedgehog (Shh) pathway, and plays a role in limb development. The full-length GLI3 form (GLI3FL) after phosphorylation and nuclear translocation, acts as an activator (GLI3A) while GLI3R, its C-terminally truncated form, acts as a repressor. A proper balance between the GLI3 activator and the repressor GLI3R, rather than the repressor gradient itself or the activator/repressor ratio gradient, specifies limb digit number and identity. In concert with TRPS1, plays a role in regulating the size of the zone of distal chondrocytes, in restricting the zone of PTHLH expression in distal cells and in activating chondrocyte proliferation. Binds to the minimal GLI-consensus sequence 5'-GGGTGGTC-3'. Plays a role in limb and brain development. In Pan troglodytes (Chimpanzee), this protein is Transcriptional activator GLI3 (GLI3).